The following is a 683-amino-acid chain: DNA ligase (683 aa).

NAD(+) contacts are provided by residues 35–39 (DTEYD), 84–85 (SL), and Glu116. Catalysis depends on Lys118, which acts as the N6-AMP-lysine intermediate. NAD(+) contacts are provided by Arg139, Glu176, Lys293, and Lys317. Residues Cys419, Cys422, Cys437, and Cys443 each coordinate Zn(2+). A BRCT domain is found at 602 to 683 (AGPQLLAGKT…LMKLLAKGVE (82 aa)).

The protein belongs to the NAD-dependent DNA ligase family. LigA subfamily. Requires Mg(2+) as cofactor. It depends on Mn(2+) as a cofactor.

It catalyses the reaction NAD(+) + (deoxyribonucleotide)n-3'-hydroxyl + 5'-phospho-(deoxyribonucleotide)m = (deoxyribonucleotide)n+m + AMP + beta-nicotinamide D-nucleotide.. DNA ligase that catalyzes the formation of phosphodiester linkages between 5'-phosphoryl and 3'-hydroxyl groups in double-stranded DNA using NAD as a coenzyme and as the energy source for the reaction. It is essential for DNA replication and repair of damaged DNA. The chain is DNA ligase from Dechloromonas aromatica (strain RCB).